The primary structure comprises 122 residues: Large ribosomal subunit protein uL14 (122 aa).

This sequence belongs to the universal ribosomal protein uL14 family. Part of the 50S ribosomal subunit. Forms a cluster with proteins L3 and L19. In the 70S ribosome, L14 and L19 interact and together make contacts with the 16S rRNA in bridges B5 and B8.

Its function is as follows. Binds to 23S rRNA. Forms part of two intersubunit bridges in the 70S ribosome. This is Large ribosomal subunit protein uL14 from Streptomyces coelicolor (strain ATCC BAA-471 / A3(2) / M145).